The sequence spans 107 residues: Somatoliberin (107 aa).

The N-terminal stretch at 1–19 (MPLWVFFVILTLTNGSHCS) is a signal peptide. Positions 20 to 30 (PSPSLPFRIRR) are excised as a propeptide. Leu-74 carries the leucine amide modification. The propeptide occupies 77 to 107 (QVDSMWADHRQMSLESLLAALLQKHSRDSQG).

Belongs to the glucagon family.

The protein resides in the secreted. In terms of biological role, GRF is released by the hypothalamus and acts on the adenohypophyse to stimulate the secretion of growth hormone. In Mesocricetus auratus (Golden hamster), this protein is Somatoliberin (GHRH).